The following is a 543-amino-acid chain: CTP synthase (543 aa).

The interval 1–265 (MTRFIFVTGG…DQIVLDKFGL (265 aa)) is amidoligase domain. CTP is bound at residue Ser-13. Residue Ser-13 coordinates UTP. ATP contacts are provided by residues 14-19 (SLGKGI) and Asp-71. Residues Asp-71 and Glu-139 each coordinate Mg(2+). CTP-binding positions include 146 to 148 (DIE), 186 to 191 (KTKPTQ), and Lys-222. UTP contacts are provided by residues 186-191 (KTKPTQ) and Lys-222. In terms of domain architecture, Glutamine amidotransferase type-1 spans 290-541 (TIAMVGKYMD…IQAAVEQNER (252 aa)). Gly-351 provides a ligand contact to L-glutamine. Cys-378 functions as the Nucleophile; for glutamine hydrolysis in the catalytic mechanism. Residues 379-382 (LGMQ), Glu-402, and Arg-469 contribute to the L-glutamine site. Catalysis depends on residues His-514 and Glu-516.

Belongs to the CTP synthase family. As to quaternary structure, homotetramer.

The catalysed reaction is UTP + L-glutamine + ATP + H2O = CTP + L-glutamate + ADP + phosphate + 2 H(+). The enzyme catalyses L-glutamine + H2O = L-glutamate + NH4(+). It carries out the reaction UTP + NH4(+) + ATP = CTP + ADP + phosphate + 2 H(+). It functions in the pathway pyrimidine metabolism; CTP biosynthesis via de novo pathway; CTP from UDP: step 2/2. With respect to regulation, allosterically activated by GTP, when glutamine is the substrate; GTP has no effect on the reaction when ammonia is the substrate. The allosteric effector GTP functions by stabilizing the protein conformation that binds the tetrahedral intermediate(s) formed during glutamine hydrolysis. Inhibited by the product CTP, via allosteric rather than competitive inhibition. In terms of biological role, catalyzes the ATP-dependent amination of UTP to CTP with either L-glutamine or ammonia as the source of nitrogen. Regulates intracellular CTP levels through interactions with the four ribonucleotide triphosphates. The polypeptide is CTP synthase (Saccharophagus degradans (strain 2-40 / ATCC 43961 / DSM 17024)).